Reading from the N-terminus, the 428-residue chain is Histone-lysine N-methyltransferase SMYD3 (428 aa).

Methionine 1 bears the N-acetylmethionine mark. The 237-residue stretch at 4 to 240 folds into the SET domain; that stretch reads LKVEKFTTAN…AGEELTICYL (237 aa). S-adenosyl-L-methionine is bound at residue 14 to 16; that stretch reads RGN. Zn(2+) contacts are provided by cysteine 49, cysteine 52, cysteine 62, cysteine 65, cysteine 71, cysteine 75, histidine 83, and cysteine 87. The MYND-type zinc-finger motif lies at 49-87; the sequence is CDRCLLGKEKLMRCSQCRIAKYCSAKCQKKAWPDHRREC. Residues tyrosine 124, asparagine 132, 205–206, tyrosine 239, and phenylalanine 259 contribute to the S-adenosyl-L-methionine site; that span reads NH. The C-terminal domain; essential for histone methyltransferase activity, nuclear localization and mediates interaction with HSP90AA1 stretch occupies residues 272 to 428; it reads DADMLTGDEQ…EECDANIRAS (157 aa).

It belongs to the class V-like SAM-binding methyltransferase superfamily. Histone-lysine methyltransferase family. As to quaternary structure, interacts with HSPCA. Interacts with HELZ. Interacts with POLR2A; the interaction may be indirect and may be mediated by HELZ. Interacts with HSP90AA1; this interaction enhances SMYD3 histone-lysine N-methyltransferase.

It localises to the cytoplasm. The protein localises to the nucleus. It carries out the reaction L-lysyl(4)-[histone H3] + 3 S-adenosyl-L-methionine = N(6),N(6),N(6)-trimethyl-L-lysyl(4)-[histone H3] + 3 S-adenosyl-L-homocysteine + 3 H(+). Histone methyltransferase activity strongly stimulated by HSPCA. Histone methyltransferase. Specifically methylates 'Lys-4' of histone H3, inducing di- and tri-methylation, but not monomethylation. Also methylates 'Lys-5' of histone H4. Plays an important role in transcriptional activation as a member of an RNA polymerase complex. Binds DNA containing 5'-CCCTCC-3' or 5'-GAGGGG-3' sequences. The chain is Histone-lysine N-methyltransferase SMYD3 (Smyd3) from Mus musculus (Mouse).